The following is a 622-amino-acid chain: Apical membrane antigen 1 (622 aa).

An N-terminal signal peptide occupies residues 1–24 (MRKLYCVLLLSAFEFTYMINFGRG). Residues 25-546 (QNYWEHPYQN…EHKPTYDNMK (522 aa)) are Extracellular-facing. 5 disulfides stabilise this stretch: cysteine 149-cysteine 302, cysteine 217-cysteine 247, cysteine 263-cysteine 275, cysteine 320-cysteine 418, and cysteine 337-cysteine 409. The N-linked (GlcNAc...) asparagine glycan is linked to asparagine 162. Residues asparagine 286, asparagine 371, asparagine 421, asparagine 422, and asparagine 499 are each glycosylated (N-linked (GlcNAc...) asparagine). Intrachain disulfides connect cysteine 443–cysteine 502, cysteine 490–cysteine 507, and cysteine 492–cysteine 509. The chain crosses the membrane as a helical span at residues 547–567 (IIIASSAAVAVLATILMVYLY). The Cytoplasmic segment spans residues 568-622 (KRKGNAEKYDKMDQPQDYGKSTSRNDEMLDPEASFWGEEKRASHTTPVLMEKPYY). The segment at 577–607 (DKMDQPQDYGKSTSRNDEMLDPEASFWGEEK) is disordered.

This sequence belongs to the apicomplexan parasites AMA1 family.

It is found in the membrane. Its function is as follows. Involved in parasite invasion of erythrocytes. The chain is Apical membrane antigen 1 (AMA-1) from Plasmodium falciparum (isolate Camp / Malaysia).